Consider the following 382-residue polypeptide: Layilin (382 aa).

The N-terminal stretch at 1-21 (MRPGTALQAVLLAVLLVGLRA) is a signal peptide. At 22 to 235 (ATGRLLSASD…SREAALNLAY (214 aa)) the chain is on the extracellular side. A C-type lectin domain is found at 45-185 (TQRPCYKVIY…CNMKNNFICK (141 aa)). 2 disulfides stabilise this stretch: C71–C184 and C150–C176. N117 carries N-linked (GlcNAc...) asparagine glycosylation. Residues 236-256 (ILIPSIPLLLLLVVTTVVCWV) traverse the membrane as a helical segment. Topologically, residues 257-382 (WICRKRKREQ…GWVENEIYGY (126 aa)) are cytoplasmic. The disordered stretch occupies residues 266–285 (QPDPSTKKQHTIWPSPHQGN). S286 and S299 each carry phosphoserine. Residues 330-374 (DYDNMAVNPSESGFVTLVSVESGFVTNDIYEFSPDQMGRSKESGW) are interaction with NF2. Residues 337-382 (NPSESGFVTLVSVESGFVTNDIYEFSPDQMGRSKESGWVENEIYGY) are interaction with TLN1. Repeat copies occupy residues 340 to 344 (ESGFV), 350 to 354 (ESGFV), 356 to 359 (NDIY), 371 to 375 (ESGWV), and 377 to 380 (NEIY). The tract at residues 340 to 375 (ESGFVTLVSVESGFVTNDIYEFSPDQMGRSKESGWV) is 3 X 5 AA repeats of E-S-G-X-V. The tract at residues 356 to 380 (NDIYEFSPDQMGRSKESGWVENEIY) is 2 X 4 AA repeats of N-X-I-Y.

In terms of assembly, interacts with NF2, RDX and TLN1.

It is found in the membrane. In terms of biological role, receptor for hyaluronate. The protein is Layilin (LAYN) of Homo sapiens (Human).